Here is a 348-residue protein sequence, read N- to C-terminus: Dihydroorotase (348 aa).

Zn(2+)-binding residues include His-13 and His-15. Substrate is bound by residues 15–17 (HLR) and Asn-41. 3 residues coordinate Zn(2+): Lys-99, His-136, and His-174. At Lys-99 the chain carries N6-carboxylysine. Substrate is bound at residue His-136. Residue Leu-219 coordinates substrate. Asp-247 is a binding site for Zn(2+). Asp-247 is a catalytic residue. Substrate-binding residues include His-251 and Ala-263.

Belongs to the metallo-dependent hydrolases superfamily. DHOase family. Class II DHOase subfamily. Homodimer. Zn(2+) is required as a cofactor.

It carries out the reaction (S)-dihydroorotate + H2O = N-carbamoyl-L-aspartate + H(+). It functions in the pathway pyrimidine metabolism; UMP biosynthesis via de novo pathway; (S)-dihydroorotate from bicarbonate: step 3/3. Its function is as follows. Catalyzes the reversible cyclization of carbamoyl aspartate to dihydroorotate. This chain is Dihydroorotase, found in Rhizobium johnstonii (strain DSM 114642 / LMG 32736 / 3841) (Rhizobium leguminosarum bv. viciae).